The chain runs to 349 residues: Green-sensitive opsin-1 (349 aa).

Over 1–36 (MNGTEGKNFYVPMSNRTGLVRSPFEYPQYYLAEPWQ) the chain is Extracellular. N-linked (GlcNAc...) asparagine glycans are attached at residues asparagine 2 and asparagine 15. The chain crosses the membrane as a helical span at residues 37–61 (FKILALYLFFLMSMGLPINGLTLVV). Over 62 to 73 (TAQHKKLRQPLN) the chain is Cytoplasmic. A helical transmembrane segment spans residues 74-99 (FILVNLAVAGTIMVCFGFTVTFYTAI). The Extracellular portion of the chain corresponds to 100–113 (NGYFVLGPTGCAVE). Cysteine 110 and cysteine 187 are disulfide-bonded. The helical transmembrane segment at 114–133 (GFMATLGGEVALWSLVVLAI) threads the bilayer. The Cytoplasmic portion of the chain corresponds to 134-152 (ERYIVVCKPMGSFKFSSSH). The chain crosses the membrane as a helical span at residues 153 to 176 (AFAGIAFTWVMALACAAPPLFGWS). Residues 177-202 (RYIPEGMQCSCGPDYYTLNPDYNNES) are Extracellular-facing. The helical transmembrane segment at 203–230 (YVIYMFVCHFILPVAVIFFTYGRLVCTV) threads the bilayer. Over 231-252 (KAAAAQQQDSASTQKAEREVTK) the chain is Cytoplasmic. Residues 253–276 (MVILMVFGFLIAWTPYATVAAWIF) traverse the membrane as a helical segment. Topologically, residues 277 to 284 (FNKGADFS) are extracellular. A helical membrane pass occupies residues 285 to 309 (AKFMAIPAFFSKSSALYNPVIYVLL). Lysine 296 is subject to N6-(retinylidene)lysine. Residues 310 to 349 (NKQFRNCMLTTIFCGKNPLGDDESSTVSTSKTEVSSVSPA) lie on the Cytoplasmic side of the membrane. The disordered stretch occupies residues 329 to 349 (GDDESSTVSTSKTEVSSVSPA). Residues 334 to 349 (STVSTSKTEVSSVSPA) are compositionally biased toward low complexity.

This sequence belongs to the G-protein coupled receptor 1 family. Opsin subfamily. Phosphorylated on some or all of the serine and threonine residues present in the C-terminal region. In terms of tissue distribution, the color pigments are found in the cone photoreceptor cells.

It is found in the membrane. Visual pigments are the light-absorbing molecules that mediate vision. They consist of an apoprotein, opsin, covalently linked to cis-retinal. This Carassius auratus (Goldfish) protein is Green-sensitive opsin-1.